A 340-amino-acid chain; its full sequence is GTP 3',8-cyclase (340 aa).

The Radical SAM core domain occupies 8–227 (KLGRPIRDLR…TMIEQHFEID (220 aa)). R17 contacts GTP. 2 residues coordinate [4Fe-4S] cluster: C24 and C28. Position 30 (Y30) interacts with S-adenosyl-L-methionine. C31 provides a ligand contact to [4Fe-4S] cluster. R71 is a GTP binding site. G75 contributes to the S-adenosyl-L-methionine binding site. GTP is bound at residue T102. S126 is an S-adenosyl-L-methionine binding site. K163 lines the GTP pocket. Residue M197 participates in S-adenosyl-L-methionine binding. Positions 261 and 264 each coordinate [4Fe-4S] cluster. 266 to 268 (RAR) contacts GTP. Position 278 (C278) interacts with [4Fe-4S] cluster.

Belongs to the radical SAM superfamily. MoaA family. In terms of assembly, monomer and homodimer. It depends on [4Fe-4S] cluster as a cofactor.

It catalyses the reaction GTP + AH2 + S-adenosyl-L-methionine = (8S)-3',8-cyclo-7,8-dihydroguanosine 5'-triphosphate + 5'-deoxyadenosine + L-methionine + A + H(+). The protein operates within cofactor biosynthesis; molybdopterin biosynthesis. Catalyzes the cyclization of GTP to (8S)-3',8-cyclo-7,8-dihydroguanosine 5'-triphosphate. In Staphylococcus aureus (strain Mu3 / ATCC 700698), this protein is GTP 3',8-cyclase.